A 547-amino-acid chain; its full sequence is Phospholipase DDHD1 (547 aa).

Ser-184 is a catalytic residue. The region spanning 258–533 (LKFKVENFFC…ALFLLTFMYK (276 aa)) is the DDHD domain. At Ser-370 the chain carries Phosphoserine. The tract at residues 414–448 (RSSASQPSEPSKDSLEDDKKPSASPSTTTVATQTL) is disordered. Basic and acidic residues predominate over residues 423 to 434 (PSKDSLEDDKKP). Low complexity predominate over residues 435-448 (SASPSTTTVATQTL).

The protein belongs to the PA-PLA1 family. As to quaternary structure, forms homooligomers and, to a much smaller extent, heterooligomers with DDHD2. Interacts with SEC23A and SEC24C. In terms of tissue distribution, predominantly expressed in testis, in round and elongating spermatids, but not in spermatocytes (at protein level). Also expressed in the brain, and at lower levels in other tissues such as thymus and lung (at protein level).

Its subcellular location is the cytoplasm. The enzyme catalyses a 1,2-diacyl-sn-glycero-3-phosphate + H2O = a 2-acyl-sn-glycerol 3-phosphate + a fatty acid + H(+). It catalyses the reaction a 1,2-diacyl-sn-glycero-3-phospho-(1D-myo-inositol) + H2O = a 2-acyl-sn-glycero-3-phospho-D-myo-inositol + a fatty acid + H(+). The catalysed reaction is 1-octadecanoyl-2-(5Z,8Z,11Z,14Z-eicosatetraenoyl)-sn-glycero-3-phospho-(1D-myo-inositol) + H2O = 2-(5Z,8Z,11Z,14Z-eicosatetraenoyl)-sn-glycero-3-phospho-(1D-myo-inositol) + octadecanoate + H(+). It carries out the reaction a 1-acyl-2-(5Z,8Z,11Z,14Z-eicosatetraenoyl)-sn-glycero-3-phospho-(1D-myo-inositol) + H2O = 2-(5Z,8Z,11Z,14Z-eicosatetraenoyl)-sn-glycero-3-phospho-(1D-myo-inositol) + a fatty acid + H(+). The enzyme catalyses 1,2-dihexadecanoyl-sn-glycero-3-phospho-(1D-myo-inositol) + H2O = 2-hexadecanoyl-sn-glycero-3-phospho-(1D-myo-inositol) + hexadecanoate + H(+). It catalyses the reaction a 1-acyl-2-(5Z,8Z,11Z,14Z)-eicosatetraenoyl-sn-glycero-3-phosphate + H2O = 2-(5Z,8Z,11Z,14Z-eicosatetraenoyl)-sn-glycero-3-phosphate + a fatty acid + H(+). The catalysed reaction is 1-(9Z-octadecenoyl)-2-(7Z,10Z,13Z,16Z,19Z-docosapentaenoyl)-sn-glycero-3-phospho-1D-myo-inositol + H2O = 2-(7Z,10Z,13Z,16Z,19Z-docosapentaenoyl)-sn-glycero-3-phospho-1D-myo-inositol + (9Z)-octadecenoate + H(+). It carries out the reaction 1-(9Z-octadecenoyl)-2-(5Z,8Z,11Z,14Z-eicosatetraenoyl)-sn-glycero-3-phospho-1D-myo-inositol + H2O = 2-(5Z,8Z,11Z,14Z-eicosatetraenoyl)-sn-glycero-3-phospho-(1D-myo-inositol) + (9Z)-octadecenoate + H(+). The enzyme catalyses 1,2-di-(9Z-octadecenoyl)-sn-glycero-3-phospho-1D-myo-inositol + H2O = 2-(9Z-octadecenoyl)-sn-glycero-3-phospho-1D-myo-inositol + (9Z)-octadecenoate + H(+). It catalyses the reaction 1-(9Z-octadecenoyl)-2-(8Z,11Z,14Z-eicosatrienoyl)-sn-glycero-3-phospho-1D-myo-inositol + H2O = 2-(8Z,11Z,14Z-eicosatrienoyl)-sn-glycero-3-phospho-1D-myo-inositol + (9Z)-octadecenoate + H(+). The catalysed reaction is 1,2-di-(9Z-octadecenoyl)-sn-glycero-3-phosphate + H2O = 2-(9Z-octadecenoyl)-sn-glycero-3-phosphate + (9Z)-octadecenoate + H(+). It carries out the reaction 1-hexadecanoyl-2-(9Z-octadecenoyl)-sn-glycero-3-phosphate + H2O = 2-(9Z-octadecenoyl)-sn-glycero-3-phosphate + hexadecanoate + H(+). The enzyme catalyses 1-hexadecanoyl-2-(9Z-octadecenoyl)-sn-glycero-3-phospho-L-serine + H2O = 2-(9Z-octadecenoyl)-sn-glycero-3-phospho-L-serine + hexadecanoate + H(+). It catalyses the reaction 1,2-di-(5Z,8Z,11Z,14Z)-eicosatetraenoyl-sn-glycero-3-phosphate + H2O = 2-(5Z,8Z,11Z,14Z-eicosatetraenoyl)-sn-glycero-3-phosphate + (5Z,8Z,11Z,14Z)-eicosatetraenoate + H(+). The catalysed reaction is 1-octadecanoyl-2-(5Z,8Z,11Z,14Z-eicosatetraenoyl)-sn-glycero-3-phosphate + H2O = 2-(5Z,8Z,11Z,14Z-eicosatetraenoyl)-sn-glycero-3-phosphate + octadecanoate + H(+). It carries out the reaction a 1,2-diacyl-sn-glycero-3-phospho-L-serine + H2O = a 2-acyl-sn-glycero-3-phospho-L-serine + a fatty acid + H(+). The enzyme catalyses a 1,2-diacyl-sn-glycero-3-phosphocholine + H2O = a 2-acyl-sn-glycero-3-phosphocholine + a fatty acid + H(+). It catalyses the reaction 1,2-di-(9Z-octadecenoyl)-sn-glycero-3-phosphocholine + H2O = (9Z-octadecenoyl)-sn-glycero-3-phosphocholine + (9Z)-octadecenoate + H(+). The catalysed reaction is a 1,2-diacyl-sn-glycero-3-phosphoethanolamine + H2O = a 2-acyl-sn-glycero-3-phosphoethanolamine + a fatty acid + H(+). It carries out the reaction a 1,2-diacyl-sn-glycero-3-phospho-(1'-sn-glycerol) + H2O = 2-acyl-sn-glycero-3-phospho-(1'-sn-glycerol) + a fatty acid + H(+). The enzyme catalyses 1-hexadecanoyl-2-(9Z-octadecenoyl)-sn-glycero-3-phospho-(1'-sn-glycerol) + H2O = 2-(9Z-octadecenoyl)-sn-glycero-3-phospho-(1'-sn-glycerol) + hexadecanoate + H(+). It catalyses the reaction 1-acyl-2-(5Z,8Z,11Z,14Z-eicosatetraenoyl)-sn-glycero-3-phosphocholine + H2O = 2-(5Z,8Z,11Z,14Z)-eicosatetraenoyl-sn-glycero-3-phosphocholine + a fatty acid + H(+). The catalysed reaction is 1-acyl-2-(5Z,8Z,11Z,14Z)-eicosatetraenoyl-sn-glycero-3-phosphoethanolamine + H2O = 2-(5Z,8Z,11Z,14Z)-eicosatetraenoyl-sn-glycero-3-phosphoethanolamine + a fatty acid + H(+). It functions in the pathway phospholipid metabolism; phosphatidylinositol metabolism. Functionally, phospholipase A1 (PLA1) that hydrolyzes ester bonds at the sn-1 position of glycerophospholipids producing a free fatty acid and a lysophospholipid. Prefers phosphatidate (1,2-diacyl-sn-glycero-3-phosphate, PA) as substrate in vitro, but can efficiently hydrolyze phosphatidylinositol (1,2-diacyl-sn-glycero-3-phospho-(1D-myo-inositol), PI), as well as a range of other glycerophospholipid substrates such as phosphatidylcholine (1,2-diacyl-sn-glycero-3-phosphocholine, PC), phosphatidylethanolamine (1,2-diacyl-sn-glycero-3-phosphoethanolamine, PE), phosphatidylserine (1,2-diacyl-sn-glycero-3-phospho-L-serine, PS) and phosphatidylglycerol (1,2-diacyl-sn-glycero-3-phospho-(1'-sn-glycerol), PG). Involved in the regulation of the endogenous content of polyunsaturated PI and PS lipids in the nervous system. Changes in these lipids extend to downstream metabolic products like PI phosphates PIP and PIP2, which play fundamental roles in cell biology. Regulates mitochondrial morphology. These dynamic changes may be due to PA hydrolysis at the mitochondrial surface. May play a regulatory role in spermatogenesis or sperm function. In Mus musculus (Mouse), this protein is Phospholipase DDHD1.